The following is a 305-amino-acid chain: HPr kinase/phosphorylase (305 aa).

Active-site residues include His-138 and Lys-159. 153 to 160 (GESGIGKS) contacts ATP. Ser-160 lines the Mg(2+) pocket. Asp-177 serves as the catalytic Proton acceptor; for phosphorylation activity. Proton donor; for dephosphorylation activity. Residues 201 to 210 (IEIRGIGILD) form an important for the catalytic mechanism of both phosphorylation and dephosphorylation region. Glu-202 contacts Mg(2+). Arg-243 is an active-site residue. The interval 264–269 (PVRPGR) is important for the catalytic mechanism of dephosphorylation.

Belongs to the HPrK/P family. In terms of assembly, homohexamer. Mg(2+) is required as a cofactor.

It catalyses the reaction [HPr protein]-L-serine + ATP = [HPr protein]-O-phospho-L-serine + ADP + H(+). The enzyme catalyses [HPr protein]-O-phospho-L-serine + phosphate + H(+) = [HPr protein]-L-serine + diphosphate. In terms of biological role, catalyzes the ATP- as well as the pyrophosphate-dependent phosphorylation of a specific serine residue in HPr, a phosphocarrier protein of the phosphoenolpyruvate-dependent sugar phosphotransferase system (PTS). HprK/P also catalyzes the pyrophosphate-producing, inorganic phosphate-dependent dephosphorylation (phosphorolysis) of seryl-phosphorylated HPr (P-Ser-HPr). The two antagonistic activities of HprK/P are regulated by several intracellular metabolites, which change their concentration in response to the absence or presence of rapidly metabolisable carbon sources (glucose, fructose, etc.) in the growth medium. Therefore, by controlling the phosphorylation state of HPr, HPrK/P is a sensor enzyme that plays a major role in the regulation of carbon metabolism and sugar transport: it mediates carbon catabolite repression (CCR), and regulates PTS-catalyzed carbohydrate uptake and inducer exclusion. This Thermoanaerobacter pseudethanolicus (strain ATCC 33223 / 39E) (Clostridium thermohydrosulfuricum) protein is HPr kinase/phosphorylase.